Consider the following 522-residue polypeptide: Pectinesterase/pectinesterase inhibitor PPE8B (522 aa).

An N-terminal signal peptide occupies residues M1–S30. The pectinesterase inhibitor PPE8B stretch occupies residues S31–Q174. N-linked (GlcNAc...) asparagine glycans are attached at residues N105, N118, N119, N218, N221, and N274. The pectinesterase PPE8B stretch occupies residues D208 to N506. 2 residues coordinate substrate: T283 and Q313. D336 acts as the Proton donor; for pectinesterase activity in catalysis. A disulfide bridge links C350 with C370. The active-site Nucleophile; for pectinesterase activity is D357. Residue N405 is glycosylated (N-linked (GlcNAc...) asparagine). Positions 426 and 428 each coordinate substrate. Residues N489 and N496 are each glycosylated (N-linked (GlcNAc...) asparagine).

The protein in the N-terminal section; belongs to the PMEI family. This sequence in the C-terminal section; belongs to the pectinesterase family.

The protein localises to the secreted. It is found in the cell wall. The catalysed reaction is [(1-&gt;4)-alpha-D-galacturonosyl methyl ester](n) + n H2O = [(1-&gt;4)-alpha-D-galacturonosyl](n) + n methanol + n H(+). The protein operates within glycan metabolism; pectin degradation; 2-dehydro-3-deoxy-D-gluconate from pectin: step 1/5. In terms of biological role, may have roles in the deposition of pectin in developing tissues and in the wall loosening and cell separation that occurs in cell expansion, fruit ripening and abscission. This is Pectinesterase/pectinesterase inhibitor PPE8B from Prunus persica (Peach).